The sequence spans 341 residues: Ketol-acid reductoisomerase (NADP(+)) (341 aa).

The KARI N-terminal Rossmann domain maps to methionine 1–threonine 182. NADP(+) contacts are provided by residues tyrosine 25–glutamine 28, serine 51, serine 53, and aspartate 83–glutamine 86. Histidine 108 is an active-site residue. Glycine 134 provides a ligand contact to NADP(+). Residues threonine 183 to isoleucine 328 form the KARI C-terminal knotted domain. Mg(2+) contacts are provided by aspartate 191, glutamate 195, glutamate 227, and glutamate 231. Residue serine 252 coordinates substrate.

The protein belongs to the ketol-acid reductoisomerase family. Mg(2+) is required as a cofactor.

The enzyme catalyses (2R)-2,3-dihydroxy-3-methylbutanoate + NADP(+) = (2S)-2-acetolactate + NADPH + H(+). It carries out the reaction (2R,3R)-2,3-dihydroxy-3-methylpentanoate + NADP(+) = (S)-2-ethyl-2-hydroxy-3-oxobutanoate + NADPH + H(+). It participates in amino-acid biosynthesis; L-isoleucine biosynthesis; L-isoleucine from 2-oxobutanoate: step 2/4. It functions in the pathway amino-acid biosynthesis; L-valine biosynthesis; L-valine from pyruvate: step 2/4. Functionally, involved in the biosynthesis of branched-chain amino acids (BCAA). Catalyzes an alkyl-migration followed by a ketol-acid reduction of (S)-2-acetolactate (S2AL) to yield (R)-2,3-dihydroxy-isovalerate. In the isomerase reaction, S2AL is rearranged via a Mg-dependent methyl migration to produce 3-hydroxy-3-methyl-2-ketobutyrate (HMKB). In the reductase reaction, this 2-ketoacid undergoes a metal-dependent reduction by NADPH to yield (R)-2,3-dihydroxy-isovalerate. This chain is Ketol-acid reductoisomerase (NADP(+)), found in Anaeromyxobacter dehalogenans (strain 2CP-C).